Here is a 229-residue protein sequence, read N- to C-terminus: Large ribosomal subunit protein uL1 (229 aa).

The protein belongs to the universal ribosomal protein uL1 family. Part of the 50S ribosomal subunit.

Its function is as follows. Binds directly to 23S rRNA. The L1 stalk is quite mobile in the ribosome, and is involved in E site tRNA release. Protein L1 is also a translational repressor protein, it controls the translation of the L11 operon by binding to its mRNA. The sequence is that of Large ribosomal subunit protein uL1 from Streptococcus pneumoniae (strain JJA).